The chain runs to 420 residues: MLDLKFIRSNPEKVQEGLNKRNKDISIAPILELDEKRRKLLAEVEKMKAIQNQKSKEIPKLKKEGKDTTELMNELKELSDKIKELDSQVKEVEDEIEKILLTIPNIPHESVPIGKDDTENVEVRRWGEPRVPDFEIKPHWEIGEKLGILDFERASKVSGSRFTFYRGLGARLERALINFMLDLHIEKHGYVELFPPFLVARKSMIGTGQLPKFEEDAFKTTDDYFLIPTAEVPVTNYHREEILKEEDLPIKYVAYSACFRAEAGAAGKDTRGLIRQHQFNKVELVKFAKPEDSYDELEKLTADAEDVLKHLGLPYRVVLLCSGDLGFSSAKTYDIEVWMPSYGRYVEISSCSNFESFQARRANIRFRRKDGKLDFVHTLNGSGLAVGRTVAAILENFQQKDGSVVVPEVLRKYMGTDIIK.

229 to 231 is an L-serine binding site; it reads TAE. 260–262 provides a ligand contact to ATP; it reads RAE. E283 lines the L-serine pocket. 347–350 contacts ATP; it reads EISS. S382 lines the L-serine pocket.

This sequence belongs to the class-II aminoacyl-tRNA synthetase family. Type-1 seryl-tRNA synthetase subfamily. In terms of assembly, homodimer. The tRNA molecule binds across the dimer.

It localises to the cytoplasm. It catalyses the reaction tRNA(Ser) + L-serine + ATP = L-seryl-tRNA(Ser) + AMP + diphosphate + H(+). The enzyme catalyses tRNA(Sec) + L-serine + ATP = L-seryl-tRNA(Sec) + AMP + diphosphate + H(+). It functions in the pathway aminoacyl-tRNA biosynthesis; selenocysteinyl-tRNA(Sec) biosynthesis; L-seryl-tRNA(Sec) from L-serine and tRNA(Sec): step 1/1. Catalyzes the attachment of serine to tRNA(Ser). Is also able to aminoacylate tRNA(Sec) with serine, to form the misacylated tRNA L-seryl-tRNA(Sec), which will be further converted into selenocysteinyl-tRNA(Sec). The protein is Serine--tRNA ligase of Caldicellulosiruptor saccharolyticus (strain ATCC 43494 / DSM 8903 / Tp8T 6331).